The primary structure comprises 284 residues: Pantothenate synthetase (284 aa).

30–37 (MGNLHEGH) is a binding site for ATP. Catalysis depends on histidine 37, which acts as the Proton donor. Glutamine 61 is a (R)-pantoate binding site. Glutamine 61 provides a ligand contact to beta-alanine. Residue 149–152 (GEKD) participates in ATP binding. Glutamine 155 contacts (R)-pantoate. Residues valine 178 and 186-189 (LSSR) each bind ATP.

Belongs to the pantothenate synthetase family. As to quaternary structure, homodimer.

The protein resides in the cytoplasm. The catalysed reaction is (R)-pantoate + beta-alanine + ATP = (R)-pantothenate + AMP + diphosphate + H(+). It participates in cofactor biosynthesis; (R)-pantothenate biosynthesis; (R)-pantothenate from (R)-pantoate and beta-alanine: step 1/1. Its function is as follows. Catalyzes the condensation of pantoate with beta-alanine in an ATP-dependent reaction via a pantoyl-adenylate intermediate. In Sodalis glossinidius (strain morsitans), this protein is Pantothenate synthetase.